The chain runs to 296 residues: Inactive uridine phosphorylase B (296 aa).

It belongs to the PNP/UDP phosphorylase family. Homodimer.

The protein is Inactive uridine phosphorylase B of Schistosoma mansoni (Blood fluke).